The sequence spans 500 residues: L-arabinose isomerase (500 aa).

4 residues coordinate Mn(2+): Glu306, Glu333, His349, and His448.

It belongs to the arabinose isomerase family. Mn(2+) is required as a cofactor.

It carries out the reaction beta-L-arabinopyranose = L-ribulose. It participates in carbohydrate degradation; L-arabinose degradation via L-ribulose; D-xylulose 5-phosphate from L-arabinose (bacterial route): step 1/3. In terms of biological role, catalyzes the conversion of L-arabinose to L-ribulose. The chain is L-arabinose isomerase from Shewanella sp. (strain MR-7).